The primary structure comprises 415 residues: Probable peptidoglycan glycosyltransferase FtsW (415 aa).

Helical transmembrane passes span 31-51 (PILM…VTSA), 63-83 (FFFV…TVWL), 97-117 (LWIL…GIGH), 133-153 (IQVS…YIAT), 162-182 (ITGM…LLLQ), 185-205 (FGTT…ARAQ), 206-226 (WQMM…VVLS), 245-265 (FGHG…GVWG), 285-305 (FIFA…LIGL), 326-346 (IAGA…ALIN), and 361-381 (LPLM…LGFL).

This sequence belongs to the SEDS family. FtsW subfamily.

The protein resides in the cell inner membrane. The enzyme catalyses [GlcNAc-(1-&gt;4)-Mur2Ac(oyl-L-Ala-gamma-D-Glu-L-Lys-D-Ala-D-Ala)](n)-di-trans,octa-cis-undecaprenyl diphosphate + beta-D-GlcNAc-(1-&gt;4)-Mur2Ac(oyl-L-Ala-gamma-D-Glu-L-Lys-D-Ala-D-Ala)-di-trans,octa-cis-undecaprenyl diphosphate = [GlcNAc-(1-&gt;4)-Mur2Ac(oyl-L-Ala-gamma-D-Glu-L-Lys-D-Ala-D-Ala)](n+1)-di-trans,octa-cis-undecaprenyl diphosphate + di-trans,octa-cis-undecaprenyl diphosphate + H(+). Its pathway is cell wall biogenesis; peptidoglycan biosynthesis. In terms of biological role, peptidoglycan polymerase that is essential for cell division. In Halothiobacillus neapolitanus (strain ATCC 23641 / c2) (Thiobacillus neapolitanus), this protein is Probable peptidoglycan glycosyltransferase FtsW.